Consider the following 154-residue polypeptide: Deoxyuridine 5'-triphosphate nucleotidohydrolase (154 aa).

Residues 74-76 (RSG), asparagine 87, 91-93 (TID), and lysine 101 each bind substrate.

It belongs to the dUTPase family. Mg(2+) serves as cofactor.

The catalysed reaction is dUTP + H2O = dUMP + diphosphate + H(+). It participates in pyrimidine metabolism; dUMP biosynthesis; dUMP from dCTP (dUTP route): step 2/2. In terms of biological role, this enzyme is involved in nucleotide metabolism: it produces dUMP, the immediate precursor of thymidine nucleotides and it decreases the intracellular concentration of dUTP so that uracil cannot be incorporated into DNA. This Cytophaga hutchinsonii (strain ATCC 33406 / DSM 1761 / CIP 103989 / NBRC 15051 / NCIMB 9469 / D465) protein is Deoxyuridine 5'-triphosphate nucleotidohydrolase.